Consider the following 259-residue polypeptide: Global transcriptional regulator CodY (259 aa).

The GAF domain stretch occupies residues 1–155 (MNLLEKTRKI…GATVVGMEIL (155 aa)). The H-T-H motif DNA-binding region spans 203–222 (ASKIADRVGITRSVIVNALR). The residue at position 215 (S215) is a Phosphoserine.

Belongs to the CodY family.

It localises to the cytoplasm. DNA-binding global transcriptional regulator which is involved in the adaptive response to starvation and acts by directly or indirectly controlling the expression of numerous genes in response to nutrient availability. During rapid exponential growth, CodY is highly active and represses genes whose products allow adaptation to nutrient depletion. The sequence is that of Global transcriptional regulator CodY from Anoxybacillus flavithermus (strain DSM 21510 / WK1).